A 192-amino-acid chain; its full sequence is Imidazoleglycerol-phosphate dehydratase (192 aa).

Belongs to the imidazoleglycerol-phosphate dehydratase family.

It is found in the cytoplasm. It carries out the reaction D-erythro-1-(imidazol-4-yl)glycerol 3-phosphate = 3-(imidazol-4-yl)-2-oxopropyl phosphate + H2O. It participates in amino-acid biosynthesis; L-histidine biosynthesis; L-histidine from 5-phospho-alpha-D-ribose 1-diphosphate: step 6/9. In Vesicomyosocius okutanii subsp. Calyptogena okutanii (strain HA), this protein is Imidazoleglycerol-phosphate dehydratase.